The sequence spans 193 residues: 3-isopropylmalate dehydratase small subunit (193 aa).

The protein belongs to the LeuD family. LeuD type 1 subfamily. Heterodimer of LeuC and LeuD.

The enzyme catalyses (2R,3S)-3-isopropylmalate = (2S)-2-isopropylmalate. Its pathway is amino-acid biosynthesis; L-leucine biosynthesis; L-leucine from 3-methyl-2-oxobutanoate: step 2/4. In terms of biological role, catalyzes the isomerization between 2-isopropylmalate and 3-isopropylmalate, via the formation of 2-isopropylmaleate. This is 3-isopropylmalate dehydratase small subunit from Listeria monocytogenes serotype 4b (strain CLIP80459).